The sequence spans 493 residues: Protein kinase PINOID 2 (493 aa).

Positions 1-53 (MAAIKEESDYDSSRSSLTAPDSRRSWISDIGSSSSVSARSFGGDTPASSCRYK) are disordered. Positions 27–44 (ISDIGSSSSVSARSFGGD) are enriched in low complexity. The Protein kinase domain occupies 80–443 (FRLVRRLGSG…SAEVKRHPFF (364 aa)). ATP-binding positions include 86-94 (LGSGDLGNV) and Lys120. The active-site Proton acceptor is the Asp216. Over residues 295-306 (GGGAAAGNNGDG) the composition is skewed to gly residues. 2 disordered regions span residues 295 to 320 (GGGA…TAEP) and 458 to 493 (EVPA…FDYF). Positions 307 to 319 (DGNDEEAETETAE) are enriched in acidic residues. The 50-residue stretch at 444–493 (KGVNWALVRSVRPPEVPAPPAPAPKKVMTMSKKERQEPYNYRPENHFDYF) folds into the AGC-kinase C-terminal domain. A compositionally biased stretch (basic and acidic residues) spans 474-493 (SKKERQEPYNYRPENHFDYF).

This sequence belongs to the protein kinase superfamily. Ser/Thr protein kinase family.

It carries out the reaction L-seryl-[protein] + ATP = O-phospho-L-seryl-[protein] + ADP + H(+). The enzyme catalyses L-threonyl-[protein] + ATP = O-phospho-L-threonyl-[protein] + ADP + H(+). Its function is as follows. Serine/threonine-protein kinase involved in the regulation of auxin signaling. The polypeptide is Protein kinase PINOID 2 (PID2) (Oryza sativa subsp. japonica (Rice)).